Consider the following 343-residue polypeptide: Sodium/bile acid cotransporter 7 (343 aa).

Residues 1-10 are Cytoplasmic-facing; the sequence is MGLLERLRKE. The helical transmembrane segment at 11 to 31 threads the bilayer; sequence WFIVGIILVIAAAKLEPTIGG. At 32–37 the chain is on the extracellular side; sequence KGGPLK. Residues 38-58 form a helical membrane-spanning segment; sequence PEITITYIAVSAIFFNSGLSL. Over 59 to 71 the chain is Cytoplasmic; it reads KTEELTNALMHVK. The helical transmembrane segment at 72 to 92 threads the bilayer; the sequence is LHLFVQLFTLVFFPTAIWVFL. Residues 93–116 are Extracellular-facing; sequence QVLSLTPINEWLLKGLQTVSCMPP. Residues 117–137 traverse the membrane as a helical segment; sequence PVSSAVILTKAVGGNEAAAIF. Position 138 (Asn-138) is a topological domain, cytoplasmic. A helical transmembrane segment spans residues 139–159; it reads SAFGSFLGIVVTPLLLLLFLG. The Extracellular portion of the chain corresponds to 160–163; that stretch reads SSSS. The chain crosses the membrane as a helical span at residues 164 to 184; the sequence is VPFTSIFSQLFMTVVVPLIIG. Topologically, residues 185–201 are cytoplasmic; that stretch reads QIVRRYIKDWLERKKPP. A helical transmembrane segment spans residues 202 to 222; sequence FGAISSCVLLMIIYTTFCDTF. At 223 to 234 the chain is on the extracellular side; that stretch reads SNPNIDLDTFSL. The helical transmembrane segment at 235-255 threads the bilayer; that stretch reads VIIVFIIFFIQLAFMLLTFLF. Residues 256–270 lie on the Cytoplasmic side of the membrane; sequence STSKNTGFTPADTVA. Residues 271–291 form a helical membrane-spanning segment; that stretch reads IVFCSTHKSLTLGIPMLKIVF. At 292–298 the chain is on the extracellular side; that stretch reads AGYEHLS. The chain crosses the membrane as a helical span at residues 299–319; sequence LISVPLLIYHPAQILLGSVLV. Topologically, residues 320–343 are cytoplasmic; the sequence is PTIKSWMLSRQKALKLTRQPKVPL.

It belongs to the bile acid:sodium symporter (BASS) (TC 2.A.28) family.

It is found in the cell membrane. The protein localises to the endoplasmic reticulum membrane. It localises to the golgi apparatus membrane. In terms of biological role, involved in teeth and skeletal development. Has an essential role in the biosynthesis and trafficking of glycosaminoglycans and glycoproteins to produce a proper functioning extracellular matrix. Required for extracellular matrix mineralization. Also involved in the regulation of cellular calcium homeostasis. Does not show transport activity towards bile acids or steroid sulfates. The polypeptide is Sodium/bile acid cotransporter 7 (slc10a7) (Xenopus tropicalis (Western clawed frog)).